The following is a 537-amino-acid chain: CTP synthase (537 aa).

Positions 1–267 (MTNTKFVFVT…ISVLEERLFG (267 aa)) are amidoligase domain. CTP is bound at residue serine 15. Serine 15 is a UTP binding site. Residue 16-21 (SVGKGI) coordinates ATP. Tyrosine 56 lines the L-glutamine pocket. Aspartate 73 provides a ligand contact to ATP. Mg(2+) is bound by residues aspartate 73 and glutamate 141. Residues 148-150 (DIE), 188-193 (KTKPTQ), and lysine 224 each bind CTP. UTP contacts are provided by residues 188–193 (KTKPTQ) and lysine 224. The region spanning 297–535 (YVVLPDAYLS…LSEAVAKASP (239 aa)) is the Glutamine amidotransferase type-1 domain. Glycine 355 is a binding site for L-glutamine. Residue cysteine 382 is the Nucleophile; for glutamine hydrolysis of the active site. L-glutamine contacts are provided by residues 383–386 (LGMQ), glutamate 406, and arginine 463. Catalysis depends on residues histidine 508 and glutamate 510.

The protein belongs to the CTP synthase family. As to quaternary structure, homotetramer.

The enzyme catalyses UTP + L-glutamine + ATP + H2O = CTP + L-glutamate + ADP + phosphate + 2 H(+). It catalyses the reaction L-glutamine + H2O = L-glutamate + NH4(+). It carries out the reaction UTP + NH4(+) + ATP = CTP + ADP + phosphate + 2 H(+). Its pathway is pyrimidine metabolism; CTP biosynthesis via de novo pathway; CTP from UDP: step 2/2. With respect to regulation, allosterically activated by GTP, when glutamine is the substrate; GTP has no effect on the reaction when ammonia is the substrate. The allosteric effector GTP functions by stabilizing the protein conformation that binds the tetrahedral intermediate(s) formed during glutamine hydrolysis. Inhibited by the product CTP, via allosteric rather than competitive inhibition. Its function is as follows. Catalyzes the ATP-dependent amination of UTP to CTP with either L-glutamine or ammonia as the source of nitrogen. Regulates intracellular CTP levels through interactions with the four ribonucleotide triphosphates. The sequence is that of CTP synthase from Coprothermobacter proteolyticus (strain ATCC 35245 / DSM 5265 / OCM 4 / BT).